The primary structure comprises 423 residues: UPF0229 protein PST_0721 (423 aa).

Positions 84 to 109 are disordered; it reads AGERIPRPQGGGGGQGAGQASNSGEG.

The protein belongs to the UPF0229 family.

The chain is UPF0229 protein PST_0721 from Stutzerimonas stutzeri (strain A1501) (Pseudomonas stutzeri).